The chain runs to 1437 residues: Protein SUPPRESSOR OF npr1-1, CONSTITUTIVE 1 (1437 aa).

Met1 is subject to N-acetylmethionine. The 164-residue stretch at Arg19 to Thr182 folds into the TIR domain. Arg28–Arg33 serves as a coordination point for NAD(+). The active site involves Glu93. 23 LRR repeats span residues Met554 to Pro576, Leu577 to Ala598, Tyr600 to Leu621, Gly622 to Ile645, Leu647 to Ala668, Lys670 to Leu691, Glu692 to Cys715, Leu781 to Thr805, Leu807 to Leu828, His829 to Leu851, Ser852 to Ile875, Trp877 to Leu895, Arg897 to Leu918, Ser919 to Ser939, Glu940 to Thr962, Leu964 to Leu985, Ser1009 to Ser1029, Thr1030 to Leu1052, Arg1054 to Leu1075, Ser1076 to Ser1096, Thr1097 to Arg1121, Thr1123 to Leu1143, and Leu1161 to Tyr1185.

This sequence belongs to the disease resistance TIR-NB-LRR family. Homodimer. Interacts (via TIR domain) with TPR1. Interacts with EDS1. Interacts with SRFR1. Interacts with HSP90-3. Binds to MORC1/CRT1. Interacts with TRAF1B. In terms of processing, met-1 is specifically acetylated by N-terminal acetyltransferase complex A (NatA). The NatA-mediated acetylation serves as a degradation signal. Post-translationally, met-1 is specifically acetylated by N-terminal acetyltransferase complex B (NatB). The NatB-mediated acetylation stabilizes SNC1. In terms of tissue distribution, expressed in guard cells and epidermal cells, but not detected in mesophyll cells.

It is found in the cytoplasm. The protein resides in the microsome. It localises to the nucleus. The enzyme catalyses NAD(+) + H2O = ADP-D-ribose + nicotinamide + H(+). Functionally, disease resistance protein of the TIR-NB-LRR-type. Part of the RPP5 locus that contains a cluster of several paralogous disease resistance (R) genes. Resistance proteins guard the plant against pathogens that contain an appropriate avirulence protein via an indirect interaction with this avirulence protein. That triggers a defense system including the hypersensitive response, which restricts the pathogen growth. Probably acts as a NAD(+) hydrolase (NADase): in response to activation, catalyzes cleavage of NAD(+) into ADP-D-ribose (ADPR) and nicotinamide; NAD(+) cleavage triggering a defense system that promotes cell death. Expression regulated by MOS1 at chromatin level. Nuclear localization of SNC1 is essential for its activity. ABA deficiency can rescue high-temperature inhibition of SNC1-mediated defense responses. This Arabidopsis thaliana (Mouse-ear cress) protein is Protein SUPPRESSOR OF npr1-1, CONSTITUTIVE 1.